The chain runs to 390 residues: Chorismate synthase (390 aa).

Residues R39 and R45 each coordinate NADP(+). FMN is bound by residues 132–134 (RSS), 253–254 (NA), G298, 313–317 (KPIPT), and R339.

Belongs to the chorismate synthase family. In terms of assembly, homotetramer. It depends on FMNH2 as a cofactor.

The enzyme catalyses 5-O-(1-carboxyvinyl)-3-phosphoshikimate = chorismate + phosphate. It functions in the pathway metabolic intermediate biosynthesis; chorismate biosynthesis; chorismate from D-erythrose 4-phosphate and phosphoenolpyruvate: step 7/7. Catalyzes the anti-1,4-elimination of the C-3 phosphate and the C-6 proR hydrogen from 5-enolpyruvylshikimate-3-phosphate (EPSP) to yield chorismate, which is the branch point compound that serves as the starting substrate for the three terminal pathways of aromatic amino acid biosynthesis. This reaction introduces a second double bond into the aromatic ring system. The sequence is that of Chorismate synthase from Bacillus pumilus (strain SAFR-032).